Reading from the N-terminus, the 266-residue chain is Cytosolic Fe-S cluster assembly factor Nubp2 homolog (266 aa).

14-21 provides a ligand contact to ATP; that stretch reads GKGGVGKS. 2 residues coordinate [4Fe-4S] cluster: C188 and C191.

It belongs to the Mrp/NBP35 ATP-binding proteins family. Nubp2/CFD1 subfamily. Heterotetramer of 2 Nubp1 and 2 Nubp2 chains. [4Fe-4S] cluster serves as cofactor.

It is found in the cytoplasm. Component of the cytosolic iron-sulfur (Fe/S) protein assembly (CIA) machinery. Required for maturation of extramitochondrial Fe-S proteins. The Nubp1-Nubp2 heterotetramer forms a Fe-S scaffold complex, mediating the de novo assembly of an Fe-S cluster and its transfer to target apoproteins. This is Cytosolic Fe-S cluster assembly factor Nubp2 homolog from Drosophila virilis (Fruit fly).